Here is a 564-residue protein sequence, read N- to C-terminus: Quinone-dependent D-lactate dehydrogenase (564 aa).

Residues 36–207 (GTGNALAVVR…TNLQEKRYQV (172 aa)) enclose the FAD-binding PCMH-type domain. Residues 70–74 (AANTG), 78–79 (GS), G137, S144, G154, and V256 contribute to the FAD site.

The protein belongs to the quinone-dependent D-lactate dehydrogenase family. FAD is required as a cofactor.

It is found in the cell inner membrane. The catalysed reaction is (R)-lactate + a quinone = a quinol + pyruvate. Functionally, catalyzes the oxidation of D-lactate to pyruvate. The polypeptide is Quinone-dependent D-lactate dehydrogenase (Haemophilus influenzae (strain ATCC 51907 / DSM 11121 / KW20 / Rd)).